The following is a 75-amino-acid chain: ATP synthase subunit c (75 aa).

The next 2 helical transmembrane spans lie at 8–28 (FIAIGLAVFGMLGAGLGIANI) and 52–72 (IGAAMVEIMGLLAFVLAMLLI).

This sequence belongs to the ATPase C chain family. F-type ATPases have 2 components, F(1) - the catalytic core - and F(0) - the membrane proton channel. F(1) has five subunits: alpha(3), beta(3), gamma(1), delta(1), epsilon(1). F(0) has three main subunits: a(1), b(2) and c(10-14). The alpha and beta chains form an alternating ring which encloses part of the gamma chain. F(1) is attached to F(0) by a central stalk formed by the gamma and epsilon chains, while a peripheral stalk is formed by the delta and b chains.

The protein localises to the cell membrane. Functionally, f(1)F(0) ATP synthase produces ATP from ADP in the presence of a proton or sodium gradient. F-type ATPases consist of two structural domains, F(1) containing the extramembraneous catalytic core and F(0) containing the membrane proton channel, linked together by a central stalk and a peripheral stalk. During catalysis, ATP synthesis in the catalytic domain of F(1) is coupled via a rotary mechanism of the central stalk subunits to proton translocation. Key component of the F(0) channel; it plays a direct role in translocation across the membrane. A homomeric c-ring of between 10-14 subunits forms the central stalk rotor element with the F(1) delta and epsilon subunits. This Wolbachia pipientis wMel protein is ATP synthase subunit c.